We begin with the raw amino-acid sequence, 354 residues long: Holliday junction branch migration complex subunit RuvB (354 aa).

The interval 5–197 is large ATPase domain (RuvB-L); it reads TDDFSAADLP…FGIVARLEFY (193 aa). ATP is bound by residues L36, R37, G78, K81, T82, T83, 144 to 146, R187, Y197, and R234; that span reads EDY. T82 contributes to the Mg(2+) binding site. A small ATPAse domain (RuvB-S) region spans residues 198–268; that stretch reads TAEELGRIVR…IANKALAMLD (71 aa). A head domain (RuvB-H) region spans residues 271–354; sequence PQGFDVMDRK…PPVSGNDMFT (84 aa). R307, R326, and R331 together coordinate DNA.

It belongs to the RuvB family. In terms of assembly, homohexamer. Forms an RuvA(8)-RuvB(12)-Holliday junction (HJ) complex. HJ DNA is sandwiched between 2 RuvA tetramers; dsDNA enters through RuvA and exits via RuvB. An RuvB hexamer assembles on each DNA strand where it exits the tetramer. Each RuvB hexamer is contacted by two RuvA subunits (via domain III) on 2 adjacent RuvB subunits; this complex drives branch migration. In the full resolvosome a probable DNA-RuvA(4)-RuvB(12)-RuvC(2) complex forms which resolves the HJ.

It is found in the cytoplasm. It catalyses the reaction ATP + H2O = ADP + phosphate + H(+). Its function is as follows. The RuvA-RuvB-RuvC complex processes Holliday junction (HJ) DNA during genetic recombination and DNA repair, while the RuvA-RuvB complex plays an important role in the rescue of blocked DNA replication forks via replication fork reversal (RFR). RuvA specifically binds to HJ cruciform DNA, conferring on it an open structure. The RuvB hexamer acts as an ATP-dependent pump, pulling dsDNA into and through the RuvAB complex. RuvB forms 2 homohexamers on either side of HJ DNA bound by 1 or 2 RuvA tetramers; 4 subunits per hexamer contact DNA at a time. Coordinated motions by a converter formed by DNA-disengaged RuvB subunits stimulates ATP hydrolysis and nucleotide exchange. Immobilization of the converter enables RuvB to convert the ATP-contained energy into a lever motion, pulling 2 nucleotides of DNA out of the RuvA tetramer per ATP hydrolyzed, thus driving DNA branch migration. The RuvB motors rotate together with the DNA substrate, which together with the progressing nucleotide cycle form the mechanistic basis for DNA recombination by continuous HJ branch migration. Branch migration allows RuvC to scan DNA until it finds its consensus sequence, where it cleaves and resolves cruciform DNA. This is Holliday junction branch migration complex subunit RuvB from Polaromonas sp. (strain JS666 / ATCC BAA-500).